Consider the following 267-residue polypeptide: MEMO1 family protein MM_1761 (267 aa).

Belongs to the MEMO1 family.

This Methanosarcina mazei (strain ATCC BAA-159 / DSM 3647 / Goe1 / Go1 / JCM 11833 / OCM 88) (Methanosarcina frisia) protein is MEMO1 family protein MM_1761.